Here is a 334-residue protein sequence, read N- to C-terminus: Protein-methionine-sulfoxide reductase catalytic subunit MsrP (334 aa).

Positions 1–44 (MKKIRPLTEADVTAESAFFMQRRQVLKALGISAAALSLPSTAQA) form a signal peptide, tat-type signal. Mo-molybdopterin is bound by residues Asn88, 91–92 (YE), Cys146, Thr181, Asn233, Arg238, and 249–251 (GIK).

This sequence belongs to the MsrP family. In terms of assembly, heterodimer of a catalytic subunit (MsrP) and a heme-binding subunit (MsrQ). Requires Mo-molybdopterin as cofactor. In terms of processing, predicted to be exported by the Tat system. The position of the signal peptide cleavage has not been experimentally proven.

It localises to the periplasm. It catalyses the reaction L-methionyl-[protein] + a quinone + H2O = L-methionyl-(S)-S-oxide-[protein] + a quinol. It carries out the reaction L-methionyl-[protein] + a quinone + H2O = L-methionyl-(R)-S-oxide-[protein] + a quinol. Its function is as follows. Part of the MsrPQ system that repairs oxidized periplasmic proteins containing methionine sulfoxide residues (Met-O), using respiratory chain electrons. Thus protects these proteins from oxidative-stress damage caused by reactive species of oxygen and chlorine generated by the host defense mechanisms. MsrPQ is essential for the maintenance of envelope integrity under bleach stress, rescuing a wide series of structurally unrelated periplasmic proteins from methionine oxidation, including the primary periplasmic chaperone SurA and the lipoprotein Pal. The catalytic subunit MsrP is non-stereospecific, being able to reduce both (R-) and (S-) diastereoisomers of methionine sulfoxide. This is Protein-methionine-sulfoxide reductase catalytic subunit MsrP from Salmonella newport (strain SL254).